The chain runs to 188 residues: Peptidyl-tRNA hydrolase (188 aa).

Y14 lines the tRNA pocket. The Proton acceptor role is filled by H19. The tRNA site is built by Y60 and N62.

The protein belongs to the PTH family. As to quaternary structure, monomer.

The protein resides in the cytoplasm. It catalyses the reaction an N-acyl-L-alpha-aminoacyl-tRNA + H2O = an N-acyl-L-amino acid + a tRNA + H(+). Its function is as follows. Hydrolyzes ribosome-free peptidyl-tRNAs (with 1 or more amino acids incorporated), which drop off the ribosome during protein synthesis, or as a result of ribosome stalling. Catalyzes the release of premature peptidyl moieties from peptidyl-tRNA molecules trapped in stalled 50S ribosomal subunits, and thus maintains levels of free tRNAs and 50S ribosomes. The chain is Peptidyl-tRNA hydrolase from Mycoplasmopsis agalactiae (strain NCTC 10123 / CIP 59.7 / PG2) (Mycoplasma agalactiae).